The following is a 625-amino-acid chain: 1-deoxy-D-xylulose-5-phosphate synthase (625 aa).

Thiamine diphosphate contacts are provided by residues His84 and 125 to 127; that span reads GHS. Asp156 serves as a coordination point for Mg(2+). Thiamine diphosphate-binding positions include 157 to 158, Asn185, Phe292, and Glu373; that span reads GA. A Mg(2+)-binding site is contributed by Asn185.

This sequence belongs to the transketolase family. DXPS subfamily. In terms of assembly, homodimer. It depends on Mg(2+) as a cofactor. The cofactor is thiamine diphosphate.

The enzyme catalyses D-glyceraldehyde 3-phosphate + pyruvate + H(+) = 1-deoxy-D-xylulose 5-phosphate + CO2. Its pathway is metabolic intermediate biosynthesis; 1-deoxy-D-xylulose 5-phosphate biosynthesis; 1-deoxy-D-xylulose 5-phosphate from D-glyceraldehyde 3-phosphate and pyruvate: step 1/1. Its function is as follows. Catalyzes the acyloin condensation reaction between C atoms 2 and 3 of pyruvate and glyceraldehyde 3-phosphate to yield 1-deoxy-D-xylulose-5-phosphate (DXP). This is 1-deoxy-D-xylulose-5-phosphate synthase from Marinomonas sp. (strain MWYL1).